A 295-amino-acid polypeptide reads, in one-letter code: Pyridoxal 5'-phosphate synthase subunit PdxS (295 aa).

Aspartate 25 lines the D-ribose 5-phosphate pocket. The active-site Schiff-base intermediate with D-ribose 5-phosphate is lysine 82. A D-ribose 5-phosphate-binding site is contributed by glycine 154. Arginine 166 is a binding site for D-glyceraldehyde 3-phosphate. Residues glycine 215 and 236–237 (GS) each bind D-ribose 5-phosphate.

This sequence belongs to the PdxS/SNZ family. As to quaternary structure, in the presence of PdxT, forms a dodecamer of heterodimers.

It carries out the reaction aldehydo-D-ribose 5-phosphate + D-glyceraldehyde 3-phosphate + L-glutamine = pyridoxal 5'-phosphate + L-glutamate + phosphate + 3 H2O + H(+). It participates in cofactor biosynthesis; pyridoxal 5'-phosphate biosynthesis. Its function is as follows. Catalyzes the formation of pyridoxal 5'-phosphate from ribose 5-phosphate (RBP), glyceraldehyde 3-phosphate (G3P) and ammonia. The ammonia is provided by the PdxT subunit. Can also use ribulose 5-phosphate and dihydroxyacetone phosphate as substrates, resulting from enzyme-catalyzed isomerization of RBP and G3P, respectively. The chain is Pyridoxal 5'-phosphate synthase subunit PdxS from Staphylococcus aureus (strain Mu3 / ATCC 700698).